Consider the following 145-residue polypeptide: Mite group 2 allergen Eur m 2 (145 aa).

The first 16 residues, 1-16 (MYKILCLSLLVAAVAA), serve as a signal peptide directing secretion. Intrachain disulfides connect Cys-24/Cys-135, Cys-37/Cys-43, and Cys-89/Cys-94.

The protein belongs to the NPC2 family.

The protein resides in the secreted. This chain is Mite group 2 allergen Eur m 2 (EURM2), found in Euroglyphus maynei (Mayne's house dust mite).